Here is a 293-residue protein sequence, read N- to C-terminus: Amine sulfotransferase (293 aa).

Residue 46–51 coordinates 3'-phosphoadenylyl sulfate; it reads KSGTIW. Histidine 101 (proton acceptor) is an active-site residue. Residues arginine 123, serine 131, 220-225, and 252-254 each bind 3'-phosphoadenylyl sulfate; these read ATFQKM and RKG.

Belongs to the sulfotransferase 1 family.

Its subcellular location is the cytoplasm. It catalyses the reaction a primary amine + 3'-phosphoadenylyl sulfate = a sulfamate + adenosine 3',5'-bisphosphate + 2 H(+). Functionally, sulfotransferase that utilizes 3'-phospho-5'-adenylyl sulfate (PAPS) as sulfonate donor to catalyze the N-sulfonation of amines. The sequence is that of Amine sulfotransferase (Sult3a1) from Mus musculus (Mouse).